The following is a 501-amino-acid chain: L-arabinose isomerase (501 aa).

Residues Glu-306, Glu-333, His-350, and His-449 each coordinate Mn(2+).

This sequence belongs to the arabinose isomerase family. It depends on Mn(2+) as a cofactor.

It catalyses the reaction beta-L-arabinopyranose = L-ribulose. The protein operates within carbohydrate degradation; L-arabinose degradation via L-ribulose; D-xylulose 5-phosphate from L-arabinose (bacterial route): step 1/3. Catalyzes the conversion of L-arabinose to L-ribulose. This is L-arabinose isomerase from Mycolicibacterium smegmatis (strain ATCC 700084 / mc(2)155) (Mycobacterium smegmatis).